A 402-amino-acid polypeptide reads, in one-letter code: LIM/homeobox protein Lhx5 (402 aa).

LIM zinc-binding domains follow at residues Val-3 to Gly-61 and Thr-62 to Leu-125. Over residues Ser-124–Ser-135 the composition is skewed to low complexity. Disordered regions lie at residues Ser-124 to Thr-186 and His-298 to Trp-402. Residues Asp-151 to Ala-167 are compositionally biased toward basic and acidic residues. The segment at residues Arg-180 to Lys-239 is a DNA-binding region (homeobox). 2 stretches are compositionally biased toward low complexity: residues Pro-300–Ser-311 and Pro-322–Ala-336.

Expressed in fetal brain and in various regions of the adult central nervous system including the spinal cord, the thalamus, and the cerebellum.

The protein localises to the nucleus. Functionally, plays an essential role in the regulation of neuronal differentiation and migration during development of the central nervous system. The chain is LIM/homeobox protein Lhx5 (LHX5) from Homo sapiens (Human).